A 426-amino-acid polypeptide reads, in one-letter code: Tetracenomycin polyketide synthase ketoacyl synthase alpha subunit (426 aa).

One can recognise a Ketosynthase family 3 (KS3) domain in the interval 6-420 (EKRVVITGIG…GFQSAAVLAR (415 aa)). Catalysis depends on for beta-ketoacyl synthase activity residues Cys-173, His-313, and His-350.

This sequence belongs to the thiolase-like superfamily. Beta-ketoacyl-ACP synthases family. As to quaternary structure, the tetracenomycin polyketide synthase (TCM PKS) is composed of a ketosynthase complex (TcmKL), an acyl carrier protein (TcmM), a cyclase (TcmN) and a probable second cyclase (TcmJ). TcmK and TcmL form a heterodimeric complex.

The enzyme catalyses 10 malonyl-CoA + 8 H(+) = tetracenomycin F2 + 10 CO2 + 10 CoA + 2 H2O. It participates in antibiotic biosynthesis; tetracenomycin C biosynthesis. Functionally, involved in the biosynthesis of tetracenomycin C (TCM C). Part of a type II polyketide synthase (PKS) that catalyzes the synthesis of tetracenomycin F2 (TCM F2), a precursor of TCM C, from malonyl-CoA. TcmK and TcmL form a heterodimeric alpha-beta complex that catalyzes the condensation reactions between the growing acyl-enzyme chain and the malonyl-CoA extender units. The sequence is that of Tetracenomycin polyketide synthase ketoacyl synthase alpha subunit from Streptomyces glaucescens.